The primary structure comprises 431 residues: Glutamate--tRNA ligase 1 (431 aa).

Residues 6–16 (PSPTGDMHIGN) carry the 'HIGH' region motif. The 'KMSKS' region motif lies at 235–239 (KMSKR). An ATP-binding site is contributed by lysine 238.

This sequence belongs to the class-I aminoacyl-tRNA synthetase family. Glutamate--tRNA ligase type 1 subfamily. Monomer.

It is found in the cytoplasm. It catalyses the reaction tRNA(Glu) + L-glutamate + ATP = L-glutamyl-tRNA(Glu) + AMP + diphosphate. Catalyzes the attachment of glutamate to tRNA(Glu) in a two-step reaction: glutamate is first activated by ATP to form Glu-AMP and then transferred to the acceptor end of tRNA(Glu). In Nitratiruptor sp. (strain SB155-2), this protein is Glutamate--tRNA ligase 1.